Reading from the N-terminus, the 905-residue chain is DNA gyrase subunit A (905 aa).

A Topo IIA-type catalytic domain is found at isoleucine 35–leucine 524. Residue tyrosine 123 is the O-(5'-phospho-DNA)-tyrosine intermediate of the active site. The short motif at glutamine 551–glycine 557 is the GyrA-box element.

The protein belongs to the type II topoisomerase GyrA/ParC subunit family. Heterotetramer, composed of two GyrA and two GyrB chains. In the heterotetramer, GyrA contains the active site tyrosine that forms a transient covalent intermediate with DNA, while GyrB binds cofactors and catalyzes ATP hydrolysis.

The protein localises to the cytoplasm. The catalysed reaction is ATP-dependent breakage, passage and rejoining of double-stranded DNA.. A type II topoisomerase that negatively supercoils closed circular double-stranded (ds) DNA in an ATP-dependent manner to modulate DNA topology and maintain chromosomes in an underwound state. Negative supercoiling favors strand separation, and DNA replication, transcription, recombination and repair, all of which involve strand separation. Also able to catalyze the interconversion of other topological isomers of dsDNA rings, including catenanes and knotted rings. Type II topoisomerases break and join 2 DNA strands simultaneously in an ATP-dependent manner. This chain is DNA gyrase subunit A, found in Rickettsia prowazekii (strain Madrid E).